The chain runs to 552 residues: FACT complex subunit POB3 (552 aa).

Residues 190-205 are compositionally biased toward basic and acidic residues; sequence KKEESSNEVVPKKEDG. 2 disordered regions span residues 190–209 and 484–552; these read KKEE…AEGE and QTAL…PKVE. A compositionally biased stretch (acidic residues) spans 490–529; it reads DSDEEDINMGSAGEDDESVDEDFQVSSDNDADEVAEEFDS. Residues 541–552 are compositionally biased toward basic and acidic residues; it reads DEERPSKKPKVE.

It belongs to the SSRP1 family. In terms of assembly, forms a stable heterodimer with SPT16. The SPT16-POB3 dimer weakly associates with multiple molecules of NHP6 (NHP6A or NHP6B) to form the FACT (yFACT or SNP) complex. The FACT complex interacts with the CK2 (casein kinase II) complex subunits CKA1, CKA2, CKB1 and CKB2 and the components of the transcription machinery CHD1, CTR9, PAF1 and CDC73. The FACT complex interacts with the PAF1 complex. SPT16 interacts with SAS3 and POL1. Interacts directly with RFA1.

It localises to the nucleus. It is found in the chromosome. Component of the FACT complex, a general chromatin factor that acts to reorganize nucleosomes. The FACT complex is involved in multiple processes that require DNA as a template such as mRNA elongation, DNA replication and DNA repair. During transcription elongation the FACT complex acts as a histone chaperone that both destabilizes and restores nucleosomal structure. It facilitates the passage of RNA polymerase II and transcription by promoting the dissociation of one histone H2A-H2B dimer from the nucleosome, then subsequently promotes the reestablishment of the nucleosome following the passage of RNA polymerase II. Transcription elongation is promoted by the repression of transcription initiation from cryptic sites. Also acts in establishing transcription initiation complexes and promotes SPT15/TBP-binding to a TATA box. Together with replication factor-A protein (RPA), FACT may play a role in nucleosome deposition during DNA replication. The chain is FACT complex subunit POB3 (POB3) from Saccharomyces cerevisiae (strain ATCC 204508 / S288c) (Baker's yeast).